Reading from the N-terminus, the 168-residue chain is Putative postmeiotic segregation increased 2-like protein 3 (168 aa).

Residues 8–84 form the KRAB domain; it reads VSFKDVAVDF…EGEFPCQHSP (77 aa).

It belongs to the DNA mismatch repair MutL/HexB family.

The protein is Putative postmeiotic segregation increased 2-like protein 3 (PMS2P3) of Homo sapiens (Human).